Consider the following 654-residue polypeptide: Acetyl-coenzyme A synthetase (654 aa).

CoA contacts are provided by residues 190-193 (RGGK) and threonine 313. ATP-binding positions include 389–391 (GEP), 413–418 (DTWWQT), aspartate 504, and arginine 519. Position 527 (serine 527) interacts with CoA. Residue arginine 530 coordinates ATP. 2 residues coordinate Mg(2+): valine 541 and valine 546. Lysine 613 bears the N6-acetyllysine mark.

Belongs to the ATP-dependent AMP-binding enzyme family. The cofactor is Mg(2+). In terms of processing, acetylated. Deacetylation by the SIR2-homolog deacetylase activates the enzyme.

The catalysed reaction is acetate + ATP + CoA = acetyl-CoA + AMP + diphosphate. Functionally, catalyzes the conversion of acetate into acetyl-CoA (AcCoA), an essential intermediate at the junction of anabolic and catabolic pathways. AcsA undergoes a two-step reaction. In the first half reaction, AcsA combines acetate with ATP to form acetyl-adenylate (AcAMP) intermediate. In the second half reaction, it can then transfer the acetyl group from AcAMP to the sulfhydryl group of CoA, forming the product AcCoA. The sequence is that of Acetyl-coenzyme A synthetase from Leptospira borgpetersenii serovar Hardjo-bovis (strain L550).